The chain runs to 295 residues: Putative enoyl reductase C646.07c (295 aa).

The Cytoplasmic segment spans residues 1 to 84; sequence MSITLSSRGR…KDLGPQIGWR (84 aa). A helical membrane pass occupies residues 85–105; that stretch reads TVFMIEYLGPLVIHLFFILNY. The Lumenal segment spans residues 106-157; that stretch reads KWIYRKDYNLCLNQKIAFVLVMLHFMKREYESIFVHRFSLATMPLRNIFKNC. A helical transmembrane segment spans residues 158-178; it reads AHYHLLSGLFLAYFIYGPWHA. At 179 to 186 the chain is on the cytoplasmic side; that stretch reads NDYIKPNH. Residues 187–207 traverse the membrane as a helical segment; the sequence is LLFLIVGWAFAVLSNFRTHII. Over 208–223 the chain is Lumenal; that stretch reads LRDLRPAGSKKRVIPT. The helical transmembrane segment at 224–246 threads the bilayer; that stretch reads GYGFNLVSFPNYFFESLGWLFFA. Topologically, residues 247–250 are cytoplasmic; that stretch reads LLTK. The chain crosses the membrane as a helical span at residues 251-268; that stretch reads SWASWIFLFVGSAQMFVW. Residues 269 to 295 are Lumenal-facing; that stretch reads AKKKHARYLKEFPNYPRSRKIMIPFFL.

Belongs to the steroid 5-alpha reductase family.

The protein resides in the endoplasmic reticulum membrane. It catalyses the reaction a (2E)-enoyl-CoA + NADPH + H(+) = a 2,3-saturated acyl-CoA + NADP(+). This chain is Putative enoyl reductase C646.07c, found in Schizosaccharomyces pombe (strain 972 / ATCC 24843) (Fission yeast).